The primary structure comprises 271 residues: Putative carboxymethylenebutenolidase (271 aa).

Active-site residues include Cys-147, Asp-204, and His-236.

Belongs to the dienelactone hydrolase family.

It carries out the reaction 2-(5-oxo-2,5-dihydrofuran-2-ylidene)acetate + H2O = 4-oxohex-2-enedioate + H(+). In Escherichia coli O157:H7, this protein is Putative carboxymethylenebutenolidase (ysgA).